Reading from the N-terminus, the 208-residue chain is Small ribosomal subunit protein uS4 (208 aa).

Residues 95 to 157 form the S4 RNA-binding domain; it reads RRIDNVVYRA…DRLKKLVRSN (63 aa).

Belongs to the universal ribosomal protein uS4 family. Part of the 30S ribosomal subunit. Contacts protein S5. The interaction surface between S4 and S5 is involved in control of translational fidelity.

Functionally, one of the primary rRNA binding proteins, it binds directly to 16S rRNA where it nucleates assembly of the body of the 30S subunit. In terms of biological role, with S5 and S12 plays an important role in translational accuracy. The sequence is that of Small ribosomal subunit protein uS4 from Borrelia turicatae (strain 91E135).